Consider the following 472-residue polypeptide: Argininosuccinate lyase (472 aa).

It belongs to the lyase 1 family. Argininosuccinate lyase subfamily.

It localises to the cytoplasm. It carries out the reaction 2-(N(omega)-L-arginino)succinate = fumarate + L-arginine. It functions in the pathway amino-acid biosynthesis; L-arginine biosynthesis; L-arginine from L-ornithine and carbamoyl phosphate: step 3/3. The polypeptide is Argininosuccinate lyase (Mycolicibacterium paratuberculosis (strain ATCC BAA-968 / K-10) (Mycobacterium paratuberculosis)).